A 393-amino-acid chain; its full sequence is Xyloside xylosyltransferase 1 (393 aa).

Topologically, residues 1-23 (MGLLRGGLPCARAMARLGAVRSH) are cytoplasmic. A helical; Signal-anchor for type II membrane protein membrane pass occupies residues 24 to 44 (YCALLLAAALAVCAFYYLGSG). Topologically, residues 45-393 (RETFSSATKR…GNCNTPIPED (349 aa)) are lumenal. UDP-alpha-D-xylose is bound at residue 104-106 (MFT). Mn(2+) is bound at residue Asp226. Leu227 is a binding site for UDP-alpha-D-xylose. Asp228 lines the Mn(2+) pocket. Residues 263-266 (HTFW) are interaction with target proteins. Ser290, Leu328, and Gln331 together coordinate UDP-alpha-D-xylose. The a glycoprotein site is built by Gln331 and Trp360. Disulfide bonds link Cys350-Cys375 and Cys357-Cys386. His383 serves as a coordination point for Mn(2+). Residue Asn385 coordinates a glycoprotein.

The protein belongs to the glycosyltransferase 8 family. Homodimer. Dimer formation may be essential for the retention in endoplasmic reticulum. Mg(2+) serves as cofactor. It depends on Mn(2+) as a cofactor.

It is found in the endoplasmic reticulum membrane. It catalyses the reaction 3-O-[alpha-D-xylosyl-(1-&gt;3)-beta-D-glucosyl]-L-seryl-[EGF-like domain protein] + UDP-alpha-D-xylose = 3-O-[alpha-D-xylosyl-(1-&gt;3)-alpha-D-xylosyl-(1-&gt;3)-beta-D-glucosyl]-L-seryl-[EGF-like domain protein] + UDP + H(+). Alpha-1,3-xylosyltransferase, which elongates the O-linked xylose-glucose disaccharide attached to EGF-like repeats in the extracellular domain of target proteins by catalyzing the addition of the second xylose. Known targets include Notch proteins and coagulation factors, such as F9. The sequence is that of Xyloside xylosyltransferase 1 (XXYLT1) from Homo sapiens (Human).